Consider the following 397-residue polypeptide: Phosphoglycerate kinase (397 aa).

Substrate contacts are provided by residues 23 to 25 (DFN), Arg38, 61 to 64 (HMGK), Arg122, and Arg155. ATP-binding positions include Lys206, Gly296, Glu327, and 353 to 356 (GGDS).

This sequence belongs to the phosphoglycerate kinase family. As to quaternary structure, monomer.

It is found in the cytoplasm. It catalyses the reaction (2R)-3-phosphoglycerate + ATP = (2R)-3-phospho-glyceroyl phosphate + ADP. Its pathway is carbohydrate degradation; glycolysis; pyruvate from D-glyceraldehyde 3-phosphate: step 2/5. The chain is Phosphoglycerate kinase from Clostridium perfringens (strain ATCC 13124 / DSM 756 / JCM 1290 / NCIMB 6125 / NCTC 8237 / Type A).